Here is a 268-residue protein sequence, read N- to C-terminus: Small ribosomal subunit protein eS1 (268 aa).

The tract at residues 1 to 21 is disordered; sequence MAVGKNKGLSKGGKKGGKKKV.

Belongs to the eukaryotic ribosomal protein eS1 family. As to quaternary structure, component of the small ribosomal subunit. Mature ribosomes consist of a small (40S) and a large (60S) subunit. The 40S subunit contains about 33 different proteins and 1 molecule of RNA (18S). The 60S subunit contains about 49 different proteins and 3 molecules of RNA (28S, 5.8S and 5S).

The protein resides in the cytoplasm. Functionally, essential for oogenesis; required for late follicle cell development. The protein is Small ribosomal subunit protein eS1 of Drosophila mojavensis (Fruit fly).